A 552-amino-acid polypeptide reads, in one-letter code: ATP synthase subunit alpha, mitochondrial (552 aa).

Residues 1-47 (MSIFSARLASSVARNLPKAANQVACKAAYPAASLAARKLHVASTQRS) constitute a mitochondrion transit peptide. 211–218 (GDRQTGKT) is a binding site for ATP.

It belongs to the ATPase alpha/beta chains family. F-type ATPases have 2 components, CF(1) - the catalytic core - and CF(0) - the membrane proton channel. CF(1) has five subunits: alpha(3), beta(3), gamma(1), delta(1), epsilon(1). CF(0) has three main subunits: a, b and c.

Its subcellular location is the mitochondrion inner membrane. Its function is as follows. Mitochondrial membrane ATP synthase (F(1)F(0) ATP synthase or Complex V) produces ATP from ADP in the presence of a proton gradient across the membrane which is generated by electron transport complexes of the respiratory chain. F-type ATPases consist of two structural domains, F(1) - containing the extramembraneous catalytic core, and F(0) - containing the membrane proton channel, linked together by a central stalk and a peripheral stalk. During catalysis, ATP synthesis in the catalytic domain of F(1) is coupled via a rotary mechanism of the central stalk subunits to proton translocation. Subunits alpha and beta form the catalytic core in F(1). Rotation of the central stalk against the surrounding alpha(3)beta(3) subunits leads to hydrolysis of ATP in three separate catalytic sites on the beta subunits. Subunit alpha does not bear the catalytic high-affinity ATP-binding sites. The protein is ATP synthase subunit alpha, mitochondrial (blw) of Drosophila melanogaster (Fruit fly).